The primary structure comprises 572 residues: 2-isopropylmalate synthase (572 aa).

In terms of domain architecture, Pyruvate carboxyltransferase spans Pro-31–Asn-305. Residues Asp-40, His-244, His-246, and Asn-280 each contribute to the Mg(2+) site. Residues Asn-437–Val-572 are regulatory domain.

The protein belongs to the alpha-IPM synthase/homocitrate synthase family. LeuA type 2 subfamily. In terms of assembly, homodimer. Mg(2+) serves as cofactor.

It is found in the cytoplasm. It catalyses the reaction 3-methyl-2-oxobutanoate + acetyl-CoA + H2O = (2S)-2-isopropylmalate + CoA + H(+). The protein operates within amino-acid biosynthesis; L-leucine biosynthesis; L-leucine from 3-methyl-2-oxobutanoate: step 1/4. Catalyzes the condensation of the acetyl group of acetyl-CoA with 3-methyl-2-oxobutanoate (2-ketoisovalerate) to form 3-carboxy-3-hydroxy-4-methylpentanoate (2-isopropylmalate). The polypeptide is 2-isopropylmalate synthase (Paraburkholderia phytofirmans (strain DSM 17436 / LMG 22146 / PsJN) (Burkholderia phytofirmans)).